Consider the following 277-residue polypeptide: Shikimate dehydrogenase (NADP(+)) (277 aa).

Shikimate contacts are provided by residues 19-21 (SKS) and T66. K70 serves as the catalytic Proton acceptor. D82 is a binding site for NADP(+). Residues N91 and D107 each contribute to the shikimate site. NADP(+)-binding positions include 133 to 137 (GAGGA), 157 to 162 (NRTRAR), and L222. Shikimate is bound at residue Y224. An NADP(+)-binding site is contributed by G245.

This sequence belongs to the shikimate dehydrogenase family. Homodimer.

It carries out the reaction shikimate + NADP(+) = 3-dehydroshikimate + NADPH + H(+). It functions in the pathway metabolic intermediate biosynthesis; chorismate biosynthesis; chorismate from D-erythrose 4-phosphate and phosphoenolpyruvate: step 4/7. In terms of biological role, involved in the biosynthesis of the chorismate, which leads to the biosynthesis of aromatic amino acids. Catalyzes the reversible NADPH linked reduction of 3-dehydroshikimate (DHSA) to yield shikimate (SA). The protein is Shikimate dehydrogenase (NADP(+)) of Roseobacter denitrificans (strain ATCC 33942 / OCh 114) (Erythrobacter sp. (strain OCh 114)).